A 360-amino-acid chain; its full sequence is LETM1 domain-containing protein 1 (360 aa).

Residues 1–110 (MALSRVCWAR…KKARRIKTNM (110 aa)) form a required and sufficient for mitochondrial import region. The Cytoplasmic segment spans residues 1 to 137 (MALSRVCWAR…LRQFRRDVTK (137 aa)). The helical transmembrane segment at 138–158 (CLFLGILSIPPFANYLVFLLM) threads the bilayer. Topologically, residues 159–360 (YLFPRQLLIR…LSINYVGSRR (202 aa)) are mitochondrial intermembrane. A Letm1 RBD domain is found at 186 to 360 (LRKQSHPEIL…LSINYVGSRR (175 aa)).

As to quaternary structure, interacts with BRI3BP. Interacts (via C-terminal) with SMARCA4; the interaction regulates transcriptional expression of thermogenic genes in brown adipose tissue.

It is found in the mitochondrion outer membrane. The protein localises to the nucleus. It localises to the mitochondrion inner membrane. Plays an essential role for mitochondrial structure and function, as well as thermogenesis of brown adipocytes. In brown adipose tissue also localizes in the nucleus where it interacts with the chromatin remodeler SMARCA4 to regulate thermogenic genes expression, such as UCP1. May regulate phagocytosis and inflammatory responses to lipopolysaccharide in macrophages. Involved in tumorigenesis and may function as a negative regulator of the p53/TP53. The chain is LETM1 domain-containing protein 1 from Bos taurus (Bovine).